The following is a 318-amino-acid chain: tRNA dimethylallyltransferase (318 aa).

9 to 16 (GATASGKT) is a binding site for ATP. 11–16 (TASGKT) serves as a coordination point for substrate. Interaction with substrate tRNA regions lie at residues 34–37 (DSAQ) and 158–162 (QRIIR).

It belongs to the IPP transferase family. Monomer. Mg(2+) is required as a cofactor.

It catalyses the reaction adenosine(37) in tRNA + dimethylallyl diphosphate = N(6)-dimethylallyladenosine(37) in tRNA + diphosphate. Functionally, catalyzes the transfer of a dimethylallyl group onto the adenine at position 37 in tRNAs that read codons beginning with uridine, leading to the formation of N6-(dimethylallyl)adenosine (i(6)A). The polypeptide is tRNA dimethylallyltransferase (Dichelobacter nodosus (strain VCS1703A)).